Here is a 336-residue protein sequence, read N- to C-terminus: tRNA-modifying protein YgfZ (336 aa).

Folate is bound by residues tryptophan 28 and tryptophan 191.

The protein belongs to the tRNA-modifying YgfZ family.

The protein resides in the cytoplasm. Functionally, folate-binding protein involved in regulating the level of ATP-DnaA and in the modification of some tRNAs. It is probably a key factor in regulatory networks that act via tRNA modification, such as initiation of chromosomal replication. The chain is tRNA-modifying protein YgfZ from Hamiltonella defensa subsp. Acyrthosiphon pisum (strain 5AT).